A 57-amino-acid polypeptide reads, in one-letter code: DNA-directed RNA polymerase subunit Rpo6 (57 aa).

This sequence belongs to the archaeal Rpo6/eukaryotic RPB6 RNA polymerase subunit family. As to quaternary structure, part of the RNA polymerase complex.

The protein resides in the cytoplasm. It carries out the reaction RNA(n) + a ribonucleoside 5'-triphosphate = RNA(n+1) + diphosphate. Functionally, DNA-dependent RNA polymerase (RNAP) catalyzes the transcription of DNA into RNA using the four ribonucleoside triphosphates as substrates. The sequence is that of DNA-directed RNA polymerase subunit Rpo6 from Thermococcus onnurineus (strain NA1).